A 330-amino-acid chain; its full sequence is Aspartate--ammonia ligase (330 aa).

This sequence belongs to the class-II aminoacyl-tRNA synthetase family. AsnA subfamily.

It is found in the cytoplasm. It carries out the reaction L-aspartate + NH4(+) + ATP = L-asparagine + AMP + diphosphate + H(+). It participates in amino-acid biosynthesis; L-asparagine biosynthesis; L-asparagine from L-aspartate (ammonia route): step 1/1. The polypeptide is Aspartate--ammonia ligase (Shigella flexneri serotype 5b (strain 8401)).